Reading from the N-terminus, the 341-residue chain is L-threonine 3-dehydrogenase (341 aa).

Zn(2+) is bound at residue C38. Residues T40 and H43 each act as charge relay system in the active site. Zn(2+)-binding residues include H63, E64, C93, C96, C99, and C107. NAD(+)-binding positions include I175, D195, R200, 262–264 (LGI), and 286–287 (IY).

It belongs to the zinc-containing alcohol dehydrogenase family. As to quaternary structure, homotetramer. It depends on Zn(2+) as a cofactor.

It localises to the cytoplasm. The catalysed reaction is L-threonine + NAD(+) = (2S)-2-amino-3-oxobutanoate + NADH + H(+). It functions in the pathway amino-acid degradation; L-threonine degradation via oxydo-reductase pathway; glycine from L-threonine: step 1/2. Its function is as follows. Catalyzes the NAD(+)-dependent oxidation of L-threonine to 2-amino-3-ketobutyrate. This is L-threonine 3-dehydrogenase from Marinomonas sp. (strain MWYL1).